The chain runs to 408 residues: Phosphopentomutase (408 aa).

Positions 10, 303, 308, 344, 345, and 356 each coordinate Mn(2+).

It belongs to the phosphopentomutase family. The cofactor is Mn(2+).

The protein resides in the cytoplasm. The catalysed reaction is 2-deoxy-alpha-D-ribose 1-phosphate = 2-deoxy-D-ribose 5-phosphate. The enzyme catalyses alpha-D-ribose 1-phosphate = D-ribose 5-phosphate. Its pathway is carbohydrate degradation; 2-deoxy-D-ribose 1-phosphate degradation; D-glyceraldehyde 3-phosphate and acetaldehyde from 2-deoxy-alpha-D-ribose 1-phosphate: step 1/2. Its function is as follows. Isomerase that catalyzes the conversion of deoxy-ribose 1-phosphate (dRib-1-P) and ribose 1-phosphate (Rib-1-P) to deoxy-ribose 5-phosphate (dRib-5-P) and ribose 5-phosphate (Rib-5-P), respectively. The protein is Phosphopentomutase of Tolumonas auensis (strain DSM 9187 / NBRC 110442 / TA 4).